We begin with the raw amino-acid sequence, 462 residues long: NAD-capped RNA hydrolase NUDT12 (462 aa).

ANK repeat units lie at residues 11-40 (EIVTQFHCSAAEGDIAKLTGILSHSPSLLN), 45-74 (NGWTALMYAARNGHPEIVQFLLEKGCDRSI), and 78-98 (SRQTALDIAVFWGYKHIANLL). N6-succinyllysine is present on K185. Zn(2+) is bound by residues C284 and C287. The residue at position 292 (K292) is an N6-succinyllysine. Zn(2+) contacts are provided by C302 and C307. Substrate-binding positions include Y318, 354–356 (AGF), E370, E374, and E415. One can recognise a Nudix hydrolase domain in the interval 319 to 453 (PRVDPVVIMQ…SRAIAHQLIK (135 aa)). Residues A354, E370, E374, and E415 each coordinate Mg(2+). The Nudix box signature appears at 355-376 (GFIEPGETIEDAVRREVEEESG). The short motif at 460–462 (PNL) is the Microbody targeting signal element.

The protein belongs to the Nudix hydrolase family. NudC subfamily. Homodimer. Homodimerization is essential for its catalytic activity and protein stability. Interacts (via ANK repeats) with BLMH. Requires Mg(2+) as cofactor. Zn(2+) serves as cofactor.

The protein resides in the cytoplasm. Its subcellular location is the peroxisome. The protein localises to the cytoplasmic granule. It catalyses the reaction a 5'-end NAD(+)-phospho-ribonucleoside in mRNA + H2O = a 5'-end phospho-adenosine-phospho-ribonucleoside in mRNA + beta-nicotinamide D-ribonucleotide + 2 H(+). The enzyme catalyses NAD(+) + H2O = beta-nicotinamide D-ribonucleotide + AMP + 2 H(+). It carries out the reaction NADH + H2O = reduced beta-nicotinamide D-ribonucleotide + AMP + 2 H(+). The catalysed reaction is NADPH + H2O = reduced beta-nicotinamide D-ribonucleotide + adenosine 2',5'-bisphosphate + 2 H(+). MRNA decapping enzyme that specifically removes the nicotinamide adenine dinucleotide (NAD) cap from a subset of mRNAs by hydrolyzing the diphosphate linkage to produce nicotinamide mononucleotide (NMN) and 5' monophosphate mRNA. The NAD-cap is present at the 5'-end of some RNAs; in contrast to the canonical N7 methylguanosine (m7G) cap, the NAD cap promotes mRNA decay. Preferentially acts on NAD-capped transcripts in response to nutrient stress. Also acts on free nicotinamide adenine dinucleotide molecules: hydrolyzes NAD(H) into NMN(H) and AMP, and NADPH into NMNH and 2',5'-ADP. May act to regulate the concentration of peroxisomal nicotinamide nucleotide cofactors required for oxidative metabolism in this organelle. Regulates the levels of circadian clock components PER1, PER2, PER3 and CRY2 in the liver. This chain is NAD-capped RNA hydrolase NUDT12, found in Homo sapiens (Human).